Here is a 377-residue protein sequence, read N- to C-terminus: Citrate synthase (377 aa).

Active-site residues include His258 and Asp313.

The protein belongs to the citrate synthase family. Homodimer. The N-terminus is blocked by acetylation.

The catalysed reaction is oxaloacetate + acetyl-CoA + H2O = citrate + CoA + H(+). The protein operates within carbohydrate metabolism; tricarboxylic acid cycle; isocitrate from oxaloacetate: step 1/2. Allosterically inhibited by NADH. In Saccharolobus solfataricus (strain ATCC 35092 / DSM 1617 / JCM 11322 / P2) (Sulfolobus solfataricus), this protein is Citrate synthase (gltA).